Consider the following 595-residue polypeptide: Zinc finger protein 467 (595 aa).

The interval 1-67 is disordered; the sequence is MRETLEALSS…EEGAHTEQAE (67 aa). Residue lysine 97 forms a Glycyl lysine isopeptide (Lys-Gly) (interchain with G-Cter in SUMO2) linkage. C2H2-type zinc fingers lie at residues 160-182, 188-210, 216-238, 244-266, 272-294, and 300-322; these read YGCGECERRFRDQLTLRLHQRLH, CACPDCGRSFTQRAHMLLHQRSH, FPCSECDKRFSKKAHLTRHLRTH, YPCAECGKRFSQKIHLGSHQKTH, FPCTECEKRFRKKTHLIRHQRIH, and YQCAQCARSFTHKQHLVRHQRVH. The tract at residues 313-350 is disordered; sequence QHLVRHQRVHQTAGPARPSPDSSASPHSTAPSPTPSFP. The segment covering 325–343 has biased composition (low complexity); it reads AGPARPSPDSSASPHSTAP. C2H2-type zinc fingers lie at residues 355 to 377, 431 to 453, 459 to 481, 487 to 509, 515 to 537, and 543 to 565; these read FACSDCGLSFGWKKNLATHQCLH, FFCPDCGRGFSHGQHLARHPRVH, FACTQCDRRFGSRPNLVAHSRAH, FACAQCGRRFSRKSHLGRHQAVH, HACAVCARSFSSKTNLVRHQAIH, and FSCPQCGKSFSRKTHLVRHQLIH. Lysine 368 is covalently cross-linked (Glycyl lysine isopeptide (Lys-Gly) (interchain with G-Cter in SUMO2)).

It belongs to the krueppel C2H2-type zinc-finger protein family. Interacts with STAT3. Enhances STAT3 activity by keeping it in the nucleus.

It is found in the nucleus. Transcription factor that promotes adipocyte differentiation and suppresses osteoblast differentiation in the bone marrow. Enhances the osteoclast-supporting ability of stromal cells. Binds with STAT3 the consensus sequence 5'-CTTCTGGGAAGA-3' of the acute phase response element (APRE). Transactivates several promoters including FOS, OSM and PPARG. Recruits a histone deacetylase complex. This is Zinc finger protein 467 (ZNF467) from Homo sapiens (Human).